Reading from the N-terminus, the 346-residue chain is Methylthioribose-1-phosphate isomerase (346 aa).

Substrate contacts are provided by residues 54-56 (RGA), Arg91, and Gln192. The active-site Proton donor is the Asp233. 243–244 (NK) provides a ligand contact to substrate.

This sequence belongs to the eIF-2B alpha/beta/delta subunits family. MtnA subfamily.

It carries out the reaction 5-(methylsulfanyl)-alpha-D-ribose 1-phosphate = 5-(methylsulfanyl)-D-ribulose 1-phosphate. The protein operates within amino-acid biosynthesis; L-methionine biosynthesis via salvage pathway; L-methionine from S-methyl-5-thio-alpha-D-ribose 1-phosphate: step 1/6. In terms of biological role, catalyzes the interconversion of methylthioribose-1-phosphate (MTR-1-P) into methylthioribulose-1-phosphate (MTRu-1-P). This Yersinia enterocolitica serotype O:8 / biotype 1B (strain NCTC 13174 / 8081) protein is Methylthioribose-1-phosphate isomerase.